Here is a 95-residue protein sequence, read N- to C-terminus: Progonadoliberin-1 (95 aa).

Positions 1-23 (MAPQTSNLWLLLVVMMVMSQGCC) are cleaved as a signal peptide. Gln-24 is modified (pyrrolidone carboxylic acid). Residue Gly-33 is modified to Glycine amide.

The protein belongs to the GnRH family.

The protein resides in the secreted. Its function is as follows. Stimulates the secretion of gonadotropins. The chain is Progonadoliberin-1 (gnrh1) from Pagrus major (Red sea bream).